A 353-amino-acid chain; its full sequence is 2,4-diaminopentanoate dehydrogenase (353 aa).

Belongs to the DapB family. As to quaternary structure, homodimer.

It carries out the reaction (2R,4S)-2,4-diaminopentanoate + NAD(+) + H2O = (2R)-2-amino-4-oxopentanoate + NH4(+) + NADH + H(+). It catalyses the reaction (2R,4S)-2,4-diaminopentanoate + NADP(+) + H2O = (2R)-2-amino-4-oxopentanoate + NH4(+) + NADPH + H(+). Its activity is regulated as follows. Inhibited by p-chloromercuribenzoate, iodoacetate and N-ethylmaleimide. Its function is as follows. Involved in the ornithine fermentation pathway. Catalyzes the oxidative deamination of (2R,4S)-2,4-diaminopentanoate (DAP) to yield 2-amino-4-ketopentanoate (AKP). The protein is 2,4-diaminopentanoate dehydrogenase of Acetoanaerobium sticklandii (strain ATCC 12662 / DSM 519 / JCM 1433 / CCUG 9281 / NCIMB 10654 / HF) (Clostridium sticklandii).